We begin with the raw amino-acid sequence, 205 residues long: Isochorismatase domain-containing protein 2 (205 aa).

The protein belongs to the isochorismatase family. Interacts with CDKN2A.

The protein localises to the cytoplasm. The protein resides in the nucleus. This chain is Isochorismatase domain-containing protein 2 (ISOC2), found in Macaca fascicularis (Crab-eating macaque).